The primary structure comprises 94 residues: ESAT-6-like protein EsxL (94 aa).

The protein belongs to the WXG100 family. ESAT-6 subfamily. Strongly interacts with EsxK to form a heterodimeric complex under reducing conditions. The complex is regulated by the redox state of EsxL.

It is found in the secreted. Functionally, induces apoptosis of host cells. Is immunogenic with highly specific seroreactivity towards TB patients' serum. The protein is ESAT-6-like protein EsxL of Mycobacterium tuberculosis (strain ATCC 25618 / H37Rv).